Reading from the N-terminus, the 303-residue chain is Dihydroorotate dehydrogenase B (NAD(+)), catalytic subunit (303 aa).

Residues S21 and 45–46 each bind FMN; that span reads KG. Residues K45 and 69–73 each bind substrate; that span reads NAVGL. N99 and N127 together coordinate FMN. N127 serves as a coordination point for substrate. Residue C130 is the Nucleophile of the active site. Positions 165 and 191 each coordinate FMN. 192 to 193 is a substrate binding site; it reads NT. Residues G217, 243-244, and 265-266 each bind FMN; these read GG and GT.

Belongs to the dihydroorotate dehydrogenase family. Type 1 subfamily. In terms of assembly, heterotetramer of 2 PyrK and 2 PyrD type B subunits. FMN serves as cofactor.

Its subcellular location is the cytoplasm. The catalysed reaction is (S)-dihydroorotate + NAD(+) = orotate + NADH + H(+). Its pathway is pyrimidine metabolism; UMP biosynthesis via de novo pathway; orotate from (S)-dihydroorotate (NAD(+) route): step 1/1. Its function is as follows. Catalyzes the conversion of dihydroorotate to orotate with NAD(+) as electron acceptor. The polypeptide is Dihydroorotate dehydrogenase B (NAD(+)), catalytic subunit (pyrD) (Phocaeicola vulgatus (strain ATCC 8482 / DSM 1447 / JCM 5826 / CCUG 4940 / NBRC 14291 / NCTC 11154) (Bacteroides vulgatus)).